Here is a 378-residue protein sequence, read N- to C-terminus: Succinyl-diaminopimelate desuccinylase (378 aa).

Position 68 (His68) interacts with Zn(2+). Asp70 is an active-site residue. Asp101 is a binding site for Zn(2+). Catalysis depends on Glu135, which acts as the Proton acceptor. Positions 136, 164, and 350 each coordinate Zn(2+).

This sequence belongs to the peptidase M20A family. DapE subfamily. As to quaternary structure, homodimer. Zn(2+) serves as cofactor. Co(2+) is required as a cofactor.

The enzyme catalyses N-succinyl-(2S,6S)-2,6-diaminopimelate + H2O = (2S,6S)-2,6-diaminopimelate + succinate. The protein operates within amino-acid biosynthesis; L-lysine biosynthesis via DAP pathway; LL-2,6-diaminopimelate from (S)-tetrahydrodipicolinate (succinylase route): step 3/3. Its function is as follows. Catalyzes the hydrolysis of N-succinyl-L,L-diaminopimelic acid (SDAP), forming succinate and LL-2,6-diaminopimelate (DAP), an intermediate involved in the bacterial biosynthesis of lysine and meso-diaminopimelic acid, an essential component of bacterial cell walls. The sequence is that of Succinyl-diaminopimelate desuccinylase from Acinetobacter baumannii (strain ATCC 17978 / DSM 105126 / CIP 53.77 / LMG 1025 / NCDC KC755 / 5377).